The sequence spans 263 residues: Metaxin-2 (263 aa).

S2 is subject to N-acetylserine.

It belongs to the metaxin family. As to quaternary structure, interacts with MTX1/metaxin-1. Associates with the mitochondrial contact site and cristae organizing system (MICOS) complex, composed of at least MICOS10/MIC10, CHCHD3/MIC19, CHCHD6/MIC25, APOOL/MIC27, IMMT/MIC60, APOO/MIC23/MIC26 and QIL1/MIC13. This complex was also known under the names MINOS or MitOS complex. The MICOS complex associates with mitochondrial outer membrane proteins SAMM50, MTX1 and MTX2 (together described as components of the mitochondrial outer membrane sorting assembly machinery (SAM) complex) and DNAJC11, mitochondrial inner membrane protein TMEM11 and with HSPA9. The MICOS and SAM complexes together with DNAJC11 are part of a large protein complex spanning both membranes termed the mitochondrial intermembrane space bridging (MIB) complex.

Its subcellular location is the mitochondrion outer membrane. The protein resides in the mitochondrion. Its function is as follows. Involved in transport of proteins into the mitochondrion. The polypeptide is Metaxin-2 (Mtx2) (Mus musculus (Mouse)).